The sequence spans 287 residues: F-actin-capping protein subunit beta (287 aa).

N-acetylserine is present on serine 2. Serine 85 and serine 92 each carry phosphoserine.

The protein belongs to the F-actin-capping protein beta subunit family. As to quaternary structure, component of the F-actin capping complex, composed of a heterodimer of an alpha and a beta subunit. Interacts with BSP1 (via C-terminus); leading to recruitment of the F-actin capping complex to actin cortical patches and the acomyosin contractile ring.

It is found in the cytoplasm. Its subcellular location is the cytoskeleton. The protein resides in the actin patch. It localises to the bud. The protein localises to the bud tip. Its function is as follows. F-actin-capping proteins bind in a Ca(2+)-independent manner to the fast growing ends of actin filaments (barbed end) thereby blocking the exchange of subunits at these ends. Unlike other capping proteins (such as gelsolin and severin), these proteins do not sever actin filaments. The sequence is that of F-actin-capping protein subunit beta (CAP2) from Saccharomyces cerevisiae (strain ATCC 204508 / S288c) (Baker's yeast).